The primary structure comprises 197 residues: Probable GTP-binding protein EngB (197 aa).

In terms of domain architecture, EngB-type G spans 22–195 (NLPEIAFVGR…VDYLFDDLVE (174 aa)). Residues 30-37 (GRSNVGKS), 57-61 (GKTRL), 75-78 (DLPG), 142-145 (TKSD), and 174-176 (FSS) contribute to the GTP site. Mg(2+)-binding residues include Ser37 and Thr59.

Belongs to the TRAFAC class TrmE-Era-EngA-EngB-Septin-like GTPase superfamily. EngB GTPase family. Mg(2+) serves as cofactor.

Its function is as follows. Necessary for normal cell division and for the maintenance of normal septation. This is Probable GTP-binding protein EngB from Clostridium perfringens (strain SM101 / Type A).